Consider the following 506-residue polypeptide: Maturase K (506 aa).

The protein belongs to the intron maturase 2 family. MatK subfamily.

The protein resides in the plastid. It is found in the chloroplast. Usually encoded in the trnK tRNA gene intron. Probably assists in splicing its own and other chloroplast group II introns. The sequence is that of Maturase K from Rhododendron tomentosum (Marsh Labrador tea).